Here is a 174-residue protein sequence, read N- to C-terminus: Ribosome maturation factor RimM (174 aa).

A PRC barrel domain is found at 98–171; the sequence is EGEFYFHQII…TIHIEVMEGL (74 aa).

It belongs to the RimM family. In terms of assembly, binds ribosomal protein uS19.

Its subcellular location is the cytoplasm. Its function is as follows. An accessory protein needed during the final step in the assembly of 30S ribosomal subunit, possibly for assembly of the head region. Essential for efficient processing of 16S rRNA. May be needed both before and after RbfA during the maturation of 16S rRNA. It has affinity for free ribosomal 30S subunits but not for 70S ribosomes. This chain is Ribosome maturation factor RimM, found in Bacillus pumilus (strain SAFR-032).